The following is a 152-amino-acid chain: Deoxyuridine 5'-triphosphate nucleotidohydrolase (152 aa).

Residues 71–73, Asn-84, 88–90, and Met-98 contribute to the substrate site; these read RSG and LID.

It belongs to the dUTPase family. It depends on Mg(2+) as a cofactor.

The enzyme catalyses dUTP + H2O = dUMP + diphosphate + H(+). It participates in pyrimidine metabolism; dUMP biosynthesis; dUMP from dCTP (dUTP route): step 2/2. Its function is as follows. This enzyme is involved in nucleotide metabolism: it produces dUMP, the immediate precursor of thymidine nucleotides and it decreases the intracellular concentration of dUTP so that uracil cannot be incorporated into DNA. In Shewanella piezotolerans (strain WP3 / JCM 13877), this protein is Deoxyuridine 5'-triphosphate nucleotidohydrolase.